A 412-amino-acid polypeptide reads, in one-letter code: Flap endonuclease 1-B (412 aa).

The segment at 1–105 (MGIKGLTKLL…KELAKRSLKR (105 aa)) is N-domain. A Mg(2+)-binding site is contributed by Asp34. Position 71 (Arg71) interacts with DNA. 5 residues coordinate Mg(2+): Asp87, Glu159, Glu161, Asp180, and Asp182. The interval 123 to 254 (LIEKFSKRTV…QRALKLIRQH (132 aa)) is I-domain. Position 159 (Glu159) interacts with DNA. Positions 232 and 234 each coordinate DNA. Residue Asp234 participates in Mg(2+) binding.

It belongs to the XPG/RAD2 endonuclease family. FEN1 subfamily. As to quaternary structure, interacts with PCNA. Three molecules of FEN1 bind to one PCNA trimer with each molecule binding to one PCNA monomer. PCNA stimulates the nuclease activity without altering cleavage specificity. Mg(2+) serves as cofactor. In terms of processing, phosphorylated. Phosphorylation upon DNA damage induces relocalization to the nuclear plasma.

Its subcellular location is the nucleus. The protein localises to the nucleolus. The protein resides in the nucleoplasm. It is found in the mitochondrion. Functionally, structure-specific nuclease with 5'-flap endonuclease and 5'-3' exonuclease activities involved in DNA replication and repair. During DNA replication, cleaves the 5'-overhanging flap structure that is generated by displacement synthesis when DNA polymerase encounters the 5'-end of a downstream Okazaki fragment. It enters the flap from the 5'-end and then tracks to cleave the flap base, leaving a nick for ligation. Also involved in the long patch base excision repair (LP-BER) pathway, by cleaving within the apurinic/apyrimidinic (AP) site-terminated flap. Acts as a genome stabilization factor that prevents flaps from equilibrating into structures that lead to duplications and deletions. Also possesses 5'-3' exonuclease activity on nicked or gapped double-stranded DNA, and exhibits RNase H activity. Also involved in replication and repair of rDNA and in repairing mitochondrial DNA. The chain is Flap endonuclease 1-B from Oryza sativa subsp. indica (Rice).